A 367-amino-acid chain; its full sequence is Probable alcohol dehydrogenase adh (367 aa).

Positions 43, 64, 97, 100, 103, 111, and 163 each coordinate Zn(2+).

Belongs to the zinc-containing alcohol dehydrogenase family. Zn(2+) is required as a cofactor.

It catalyses the reaction a primary alcohol + NAD(+) = an aldehyde + NADH + H(+). The enzyme catalyses a secondary alcohol + NAD(+) = a ketone + NADH + H(+). This chain is Probable alcohol dehydrogenase adh (adh), found in Mycobacterium tuberculosis (strain CDC 1551 / Oshkosh).